The sequence spans 355 residues: 3-dehydroquinate synthase (355 aa).

NAD(+) contacts are provided by residues 98-102 (GVIGD), 122-123 (TT), Lys135, Lys144, and 162-165 (TLNT). Glu177, His240, and His257 together coordinate Zn(2+).

This sequence belongs to the sugar phosphate cyclases superfamily. Dehydroquinate synthase family. Co(2+) is required as a cofactor. Requires Zn(2+) as cofactor. It depends on NAD(+) as a cofactor.

The protein resides in the cytoplasm. It carries out the reaction 7-phospho-2-dehydro-3-deoxy-D-arabino-heptonate = 3-dehydroquinate + phosphate. The protein operates within metabolic intermediate biosynthesis; chorismate biosynthesis; chorismate from D-erythrose 4-phosphate and phosphoenolpyruvate: step 2/7. Its function is as follows. Catalyzes the conversion of 3-deoxy-D-arabino-heptulosonate 7-phosphate (DAHP) to dehydroquinate (DHQ). The polypeptide is 3-dehydroquinate synthase (Dictyoglomus thermophilum (strain ATCC 35947 / DSM 3960 / H-6-12)).